The following is a 185-amino-acid chain: TATA-box-binding protein 3 (185 aa).

2 tandem repeats follow at residues 7–84 and 100–178.

It belongs to the TBP family.

In terms of biological role, general factor that plays a role in the activation of archaeal genes transcribed by RNA polymerase. Binds specifically to the TATA box promoter element which lies close to the position of transcription initiation. This is TATA-box-binding protein 3 from Methanosarcina mazei (strain ATCC BAA-159 / DSM 3647 / Goe1 / Go1 / JCM 11833 / OCM 88) (Methanosarcina frisia).